The sequence spans 316 residues: Serpentine receptor class gamma-8 (316 aa).

Helical transmembrane passes span 28–48 (FVQV…LYVV), 60–80 (PFFM…IFIT), 106–126 (LYYP…IFLT), 147–167 (FSRI…NTII), 186–206 (IIPW…VVMI), 235–255 (ACAA…MKVL), and 267–287 (LVQP…MIFA).

It belongs to the nematode receptor-like protein srg family.

It is found in the membrane. This is Serpentine receptor class gamma-8 (srg-8) from Caenorhabditis elegans.